The primary structure comprises 347 residues: MNHYNRTIGSMLILVYSMLAAFLFIDKVFVNIIYFQGMFYTQIFGIPVFLFLNLIIILLCIIVGSVLAYKINQQNDWIKTQIERSMEGETVGINDQNIEIYSETLDLYHTLVPLNQELHKLRLKTQNLTNENYNINDVKVKKIIEDERQRLARELHDSVSQQLFAASMMLSAIKETKLEPPLDQQIPILEKMVQDSQLEMRALLLHLRPLGLKDKSLGEGIKDLVIDLQKKVPMKVVHEIQDFKVPKGIEDHLFRITQEAISNTLRHSNGTKVTVELFNKDDYLLLRIQDNGKGFNVDEKLEQSYGLKNMRERALEIGATFHIVSLPDSGTRIEVKAPLNKEDSYDD.

The next 2 helical transmembrane spans lie at 13–33 (ILVY…VNII) and 43–63 (IFGI…CIIV). In terms of domain architecture, Histidine kinase spans 150–341 (RLARELHDSV…RIEVKAPLNK (192 aa)). Phosphohistidine is present on His156.

Post-translationally, autophosphorylated on His-156.

It is found in the cell membrane. It carries out the reaction ATP + protein L-histidine = ADP + protein N-phospho-L-histidine.. In terms of biological role, member of the two-component regulatory system PprA/PprB involved in biofilm formation by controlling the expression of many related genes including type IVb pili major subunit flp pilin, adhesin bapA or cupE fimbriae. Also modulates quorum-sensing signal production acting on both negative and positive modulators. Functions as a heme sensor histidine kinase which is autophosphorylated at a histidine residue and transfers its phosphate group to PprB. This Staphylococcus aureus (strain Mu3 / ATCC 700698) protein is Sensor protein VraS (vraS).